The chain runs to 430 residues: Pre-B-cell leukemia transcription factor 1 (430 aa).

Residues 1–40 form a disordered region; sequence MDEQPRLMHSHAGVGMAGHPGLSQHLQDGAGGTEGEGGRK. The region spanning 38-232 is the PBC domain; the sequence is GRKQDIGDIL…VMILRSRFLD (195 aa). Positions 45–124 are PBC-A; it reads DILQQIMTIT…EGVAGPEKGG (80 aa). Residues 127–232 are PBC-B; that stretch reads AAAAAAAAAS…VMILRSRFLD (106 aa). The homeobox; TALE-type DNA-binding region spans 233–295; sequence ARRKRRNFNK…NKRIRYKKNI (63 aa). 2 disordered regions span residues 317–338 and 395–430; these read SAHG…SSSF and SPQG…DTSN. Positions 323 to 338 are enriched in low complexity; that stretch reads ANSPSTPNSAGSSSSF. Positions 407–418 are enriched in polar residues; it reads DATTPSSVTSPT.

It belongs to the TALE/PBX homeobox family. In terms of assembly, forms a heterodimer with MEIS1 which binds DNA. The PBX1-MEIS1 heterodimer binds a cAMP-responsive sequence in CYP17. It also binds a consensus region in the SOX3 promoter. PBX1 forms heterotrimers with MEIS1 and a number of HOX proteins including HOXA9, HOXD4, HOXD9 and HOXD10. Forms heterodimers with HOXA1, HOXA5, HOXB7 and HOXB8 which bind the 5'-TGATTGAT-3' consensus sequence. Also forms heterodimers with HOXA5, HOXB7, HOXB8, HOXC8 and HOXD4 which bind the 5'-ATCAATCAA-3' consensus sequence. Interacts with PBXIP1. Interacts with TLX1. Interacts with FOXC1. Interacts with MN1. Interacts with MEIS2 isoform 4, SP1, SP3 and KLF4. As to quaternary structure, part of a PDX1:PBX1b:MEIS2B complex; PBX1b recruits MEIS2B to the complex. In terms of tissue distribution, expressed in the kidney. Expressed in the endothelial cells of the glomeruli and interstitium (at protein level). Expressed in all tissues except in cells of the B and T lineage. Expressed strongly in kidney and brain.

It localises to the nucleus. Transcription factor which binds the DNA sequence 5'-TGATTGAT-3' as part of a heterodimer with HOX proteins such as HOXA1, HOXA5, HOXB7 and HOXB8. Binds to the DNA sequence 5'-TGATTGAC-3' in complex with a nuclear factor which is not a class I HOX protein. Has also been shown to bind the DNA sequence 5'-ATCAATCAA-3' cooperatively with HOXA5, HOXB7, HOXB8, HOXC8 and HOXD4. Acts as a transcriptional activator of PF4 in complex with MEIS1. Also activates transcription of SOX3 in complex with MEIS1 by binding to the 5'-TGATTGAC-3' consensus sequence. In natural killer cells, binds to the NFIL3 promoter and acts as a transcriptional activator of NFIL3, promoting natural killer cell development. Plays a role in the cAMP-dependent regulation of CYP17A1 gene expression via its cAMP-regulatory sequence (CRS1). Probably in complex with MEIS2, involved in transcriptional regulation by KLF4. Acts as a transcriptional activator of NKX2-5 and a transcriptional repressor of CDKN2B. Together with NKX2-5, required for spleen development through a mechanism that involves CDKN2B repression. In terms of biological role, as part of a PDX1:PBX1b:MEIS2B complex in pancreatic acinar cells, is involved in the transcriptional activation of the ELA1 enhancer; the complex binds to the enhancer B element and cooperates with the transcription factor 1 complex (PTF1) bound to the enhancer A element. The sequence is that of Pre-B-cell leukemia transcription factor 1 (PBX1) from Homo sapiens (Human).